A 460-amino-acid chain; its full sequence is Cysteine--tRNA ligase (460 aa).

A Zn(2+)-binding site is contributed by Cys28. The 'HIGH' region motif lies at 30–40; that stretch reads MTVYDYCHLGH. Zn(2+) is bound by residues Cys209, His234, and Glu238. The short motif at 266–270 is the 'KMSKS' region element; it reads KMSKS. ATP is bound at residue Lys269.

It belongs to the class-I aminoacyl-tRNA synthetase family. In terms of assembly, monomer. Zn(2+) is required as a cofactor.

It is found in the cytoplasm. The enzyme catalyses tRNA(Cys) + L-cysteine + ATP = L-cysteinyl-tRNA(Cys) + AMP + diphosphate. The protein is Cysteine--tRNA ligase of Pseudomonas entomophila (strain L48).